The following is a 146-amino-acid chain: Hemoglobin subunit beta (146 aa).

Position 1 is an N-acetylvaline (Val-1). Positions His-2–His-146 constitute a Globin domain. Position 12 is a phosphothreonine (Thr-12). Phosphoserine is present on Ser-44. Lys-59 carries the post-translational modification N6-acetyllysine. His-63 contributes to the heme b binding site. The residue at position 82 (Lys-82) is an N6-acetyllysine. His-92 provides a ligand contact to heme b. Cys-93 is subject to S-nitrosocysteine. Lys-144 carries the N6-acetyllysine modification.

Belongs to the globin family. Heterotetramer of two alpha chains and two beta chains. Red blood cells.

In terms of biological role, involved in oxygen transport from the lung to the various peripheral tissues. This chain is Hemoglobin subunit beta (HBB), found in Saguinus mystax (Moustached tamarin).